A 453-amino-acid polypeptide reads, in one-letter code: Endoglucanase A (453 aa).

A signal peptide spans 1 to 26; sequence MNCRKYLLSGLAVFGLAATSAVAALS. Asp82 functions as the Nucleophile in the catalytic mechanism. The linker ('hinge') (Pro-Thr box) stretch occupies residues 115–126; that stretch reads TTPTTRKPTTTP. The active site involves His417.

Belongs to the glycosyl hydrolase 9 (cellulase E) family. In terms of assembly, monomer.

The protein localises to the periplasm. The catalysed reaction is Endohydrolysis of (1-&gt;4)-beta-D-glucosidic linkages in cellulose, lichenin and cereal beta-D-glucans.. High levels of endoglucanase activity detected on acid-swollen cellulose, ball-milled cellulose, and carboxymethyl cellulose; moderate levels detected on filter paper, phosphoric acid-swollen cellulose, lichenan, and xylan. The polypeptide is Endoglucanase A (endA) (Fibrobacter succinogenes (Bacteroides succinogenes)).